Reading from the N-terminus, the 107-residue chain is U1-lycotoxin-Ls1b (107 aa).

Positions 1–20 (MMKVLVVVALLATLISYSSS) are cleaved as a signal peptide. Residues 21 to 41 (EGIDDLEADELLSLMANEQTR) constitute a propeptide that is removed on maturation. Intrachain disulfides connect Cys44/Cys59, Cys51/Cys68, Cys58/Cys86, and Cys70/Cys84.

Belongs to the neurotoxin 19 (CSTX) family. 04 (U1-Lctx) subfamily. As to expression, expressed by the venom gland.

The protein resides in the secreted. This chain is U1-lycotoxin-Ls1b, found in Lycosa singoriensis (Wolf spider).